The primary structure comprises 180 residues: Shikimate kinase (180 aa).

14–19 lines the ATP pocket; the sequence is GAGKST. Ser-18 is a binding site for Mg(2+). Positions 36, 60, and 82 each coordinate substrate. Arg-120 serves as a coordination point for ATP. Arg-140 is a substrate binding site. Gln-157 serves as a coordination point for ATP.

It belongs to the shikimate kinase family. In terms of assembly, monomer. Requires Mg(2+) as cofactor.

The protein localises to the cytoplasm. It catalyses the reaction shikimate + ATP = 3-phosphoshikimate + ADP + H(+). Its pathway is metabolic intermediate biosynthesis; chorismate biosynthesis; chorismate from D-erythrose 4-phosphate and phosphoenolpyruvate: step 5/7. Its function is as follows. Catalyzes the specific phosphorylation of the 3-hydroxyl group of shikimic acid using ATP as a cosubstrate. This chain is Shikimate kinase, found in Haemophilus influenzae (strain PittGG).